A 142-amino-acid chain; its full sequence is UPF0102 protein Bcep18194_A3391 (142 aa).

Residues 1–27 are disordered; that stretch reads MCHAAPARPGDGRGLPRAGDNFSGAAR.

This sequence belongs to the UPF0102 family.

The polypeptide is UPF0102 protein Bcep18194_A3391 (Burkholderia lata (strain ATCC 17760 / DSM 23089 / LMG 22485 / NCIMB 9086 / R18194 / 383)).